The chain runs to 1402 residues: Defective in tip formation protein A (1402 aa).

4 disordered regions span residues 1-20 (MKDI…PPQI), 37-94 (NVTT…PQIV), 109-133 (NTPS…DNDI), and 210-292 (KQSS…RRLK). Tandem repeats lie at residues 12 to 18 (TTTVAPP) and 40 to 46 (TTTVQPP). The interval 12–92 (TTTVAPPQIN…TTTTTVQPPQ (81 aa)) is 4 X 7 AA repeat of T-T-T-[IV]-[AQ]-P-P. A compositionally biased stretch (low complexity) spans 38–47 (VTTTTVQPPQ). The span at 48–58 (IVSPPSPPSPP) shows a compositional bias: pro residues. Low complexity predominate over residues 59 to 94 (QTTTIAPPTILPTTKTTTTTTTTTTTTTTVQPPQIV). Repeat copies occupy residues 60–66 (TTTIAPP) and 86–92 (TTVQPPQ). Low complexity predominate over residues 210–234 (KQSSQSQLQQQLSSQSLQQIQQKSK). Residues 235–253 (QPPPQQQQQQQPPPPPIPL) are compositionally biased toward pro residues. Low complexity predominate over residues 254 to 279 (LPQIHQQLKPKQQQEQQQQQEQQQQQ). Residues 350 to 383 (QRIKSFIENHKKKKQKYREYQSEKNQQQKSNSKK) adopt a coiled-coil conformation. 2 disordered regions span residues 429–453 (DQQQ…SPMT) and 712–745 (NNNN…NLSN). Low complexity predominate over residues 430–453 (QQQQQQQQQQSTMTTTSSSSSPMT).

The protein resides in the cell surface. Required for correct organization of the actin cytoskeleton and cytokinesis. Also required for apical sorting of prestalk cells, a prerequisite for formation of the tip at the mound stage and subsequent formation of the fruiting body. May be required for cell adhesion. This Dictyostelium discoideum (Social amoeba) protein is Defective in tip formation protein A (dtfA).